A 907-amino-acid polypeptide reads, in one-letter code: Putative pentatricopeptide repeat-containing protein At5g59900 (907 aa).

22 PPR repeats span residues 103 to 137 (STAS…ALKP), 155 to 185 (SSSS…MITK), 191 to 225 (EVRT…GIRP), 226 to 260 (DVYI…GCDV), 261 to 295 (NIVP…DLKP), 296 to 330 (DVVT…RFSP), 331 to 365 (SEAA…GVSP), 366 to 400 (NLFV…GLRP), 401 to 435 (NDVT…GLKL), 436 to 470 (SVYP…KLEP), 471 to 505 (TVVT…GIAP), 506 to 540 (SIYT…NVKP), 541 to 575 (NRVT…GIVP), 576 to 610 (DTYS…NCEL), 611 to 645 (NEIC…GVDL), 646 to 680 (DLVC…GLKP), 681 to 715 (DDVI…GCVP), 716 to 750 (NEVT…SSVP), 751 to 782 (NQVT…ILKG), 786 to 820 (NTAT…GVSP), 821 to 855 (DCIT…GIRP), and 856 to 890 (DRVA…GLIP). Residues 887 to 907 (GLIPNNKTSRTTTSNDTSSKS) are disordered. Residues 891-907 (NNKTSRTTTSNDTSSKS) show a composition bias toward low complexity.

Belongs to the PPR family. P subfamily.

The sequence is that of Putative pentatricopeptide repeat-containing protein At5g59900 from Arabidopsis thaliana (Mouse-ear cress).